Consider the following 124-residue polypeptide: Small ribosomal subunit protein uS13 (124 aa).

The segment at 97-124 (PVRGQRTKTNARTRKGPKRTIAGKKKAR) is disordered.

It belongs to the universal ribosomal protein uS13 family. As to quaternary structure, part of the 30S ribosomal subunit. Forms a loose heterodimer with protein S19. Forms two bridges to the 50S subunit in the 70S ribosome.

Located at the top of the head of the 30S subunit, it contacts several helices of the 16S rRNA. In the 70S ribosome it contacts the 23S rRNA (bridge B1a) and protein L5 of the 50S subunit (bridge B1b), connecting the 2 subunits; these bridges are implicated in subunit movement. Contacts the tRNAs in the A and P-sites. This Mycolicibacterium gilvum (strain PYR-GCK) (Mycobacterium gilvum (strain PYR-GCK)) protein is Small ribosomal subunit protein uS13.